Here is a 361-residue protein sequence, read N- to C-terminus: tRNA-specific 2-thiouridylase MnmA (361 aa).

Residues leucine 6–serine 13 and isoleucine 32 each bind ATP. Residues asparagine 93–aspartate 95 are interaction with target base in tRNA. The active-site Nucleophile is cysteine 98. A disulfide bond links cysteine 98 and cysteine 193. Glycine 121 provides a ligand contact to ATP. The tract at residues lysine 143–glutamine 145 is interaction with tRNA. The Cysteine persulfide intermediate role is filled by cysteine 193.

It belongs to the MnmA/TRMU family.

The protein localises to the cytoplasm. The enzyme catalyses S-sulfanyl-L-cysteinyl-[protein] + uridine(34) in tRNA + AH2 + ATP = 2-thiouridine(34) in tRNA + L-cysteinyl-[protein] + A + AMP + diphosphate + H(+). Catalyzes the 2-thiolation of uridine at the wobble position (U34) of tRNA, leading to the formation of s(2)U34. The chain is tRNA-specific 2-thiouridylase MnmA from Porphyromonas gingivalis (strain ATCC 33277 / DSM 20709 / CIP 103683 / JCM 12257 / NCTC 11834 / 2561).